The sequence spans 134 residues: Tripartite terminase subunit 2 (134 aa).

It belongs to the herpesviridae TRM2 protein family. As to quaternary structure, associates with TRM1 and TRM3 to form the tripartite terminase complex.

It is found in the host nucleus. Its function is as follows. Component of the molecular motor that translocates viral genomic DNA in empty capsid during DNA packaging. Forms a tripartite terminase complex together with TRM1 and TRM3 in the host cytoplasm. Once the complex reaches the host nucleus, it interacts with the capsid portal vertex. This portal forms a ring in which genomic DNA is translocated into the capsid. In Gallus gallus (Chicken), this protein is Tripartite terminase subunit 2.